A 173-amino-acid polypeptide reads, in one-letter code: NADH-ubiquinone oxidoreductase chain 6 (173 aa).

The next 5 membrane-spanning stretches (helical) occupy residues 1–21 (MTYF…AVAS), 27–47 (YGVV…LSLG), 48–68 (ASFV…VVFV), 87–107 (VIGY…IGGF), and 139–159 (WGAG…FVVL).

It belongs to the complex I subunit 6 family.

It is found in the mitochondrion membrane. It carries out the reaction a ubiquinone + NADH + 5 H(+)(in) = a ubiquinol + NAD(+) + 4 H(+)(out). In terms of biological role, core subunit of the mitochondrial membrane respiratory chain NADH dehydrogenase (Complex I) that is believed to belong to the minimal assembly required for catalysis. Complex I functions in the transfer of electrons from NADH to the respiratory chain. The immediate electron acceptor for the enzyme is believed to be ubiquinone. This Brachyramphus brevirostris (Kittlitz's murrelet) protein is NADH-ubiquinone oxidoreductase chain 6 (MT-ND6).